A 384-amino-acid polypeptide reads, in one-letter code: Succinyl-diaminopimelate desuccinylase (384 aa).

His72 provides a ligand contact to Zn(2+). Residue Asp74 is part of the active site. Asp105 contacts Zn(2+). Glu139 (proton acceptor) is an active-site residue. Glu140, Glu168, and His355 together coordinate Zn(2+).

Belongs to the peptidase M20A family. DapE subfamily. In terms of assembly, homodimer. It depends on Zn(2+) as a cofactor. Co(2+) serves as cofactor.

The enzyme catalyses N-succinyl-(2S,6S)-2,6-diaminopimelate + H2O = (2S,6S)-2,6-diaminopimelate + succinate. It functions in the pathway amino-acid biosynthesis; L-lysine biosynthesis via DAP pathway; LL-2,6-diaminopimelate from (S)-tetrahydrodipicolinate (succinylase route): step 3/3. In terms of biological role, catalyzes the hydrolysis of N-succinyl-L,L-diaminopimelic acid (SDAP), forming succinate and LL-2,6-diaminopimelate (DAP), an intermediate involved in the bacterial biosynthesis of lysine and meso-diaminopimelic acid, an essential component of bacterial cell walls. This chain is Succinyl-diaminopimelate desuccinylase, found in Blochmanniella pennsylvanica (strain BPEN).